A 212-amino-acid chain; its full sequence is MQLNIYLRDSKLSHPVFKTMSEIALFIINSINEIDVGQVDRFVGELERVYREKRKVLVMGAGRSGLVGKAFAMRLLHLGFNSYVLGETIVPSVREGDLVVAISGSGRTKVIVTAAETAKQVGATVAAITTYPDSPLGRLSDIVVRVPGRTKSSKMDDYFARQILGIHEPLAPLGTLFEDTTMVFLDGVIYSLMTRLGIDEEYMRNMHANVEL.

The 153-residue stretch at 46–198 (LERVYREKRK…IYSLMTRLGI (153 aa)) folds into the SIS domain.

This sequence belongs to the SIS family. PHI subfamily.

This is an uncharacterized protein from Aeropyrum pernix (strain ATCC 700893 / DSM 11879 / JCM 9820 / NBRC 100138 / K1).